Consider the following 89-residue polypeptide: MTSRPADQDSVRSSASVPLYPAASPVPAEAYYSESEDEAANDFLVRMGRQQSVLRRRRRRTRCVGLVIACLVVALLSGGFGALLVWLLR.

Over residues 1–10 (MTSRPADQDS) the composition is skewed to basic and acidic residues. The interval 1 to 21 (MTSRPADQDSVRSSASVPLYP) is disordered. Topologically, residues 1-66 (MTSRPADQDS…RRRRTRCVGL (66 aa)) are intravirion. Positions 20–23 (YPAA) match the Internalization motif motif. The segment at 29–38 (EAYYSESEDE) is acidic. Ser33 and Ser35 each carry phosphoserine; by host CK2. The chain crosses the membrane as a helical; Signal-anchor for type II membrane protein span at residues 67–87 (VIACLVVALLSGGFGALLVWL). Over 88–89 (LR) the chain is Virion surface.

Belongs to the alphaherpesvirinae envelope protein US9 family. Phosphorylated on serines within the acidic cluster, possibly by host CK2. Phosphorylation determines whether endocytosed viral US9 traffics to the trans-Golgi network or recycles to the cell membrane.

The protein resides in the virion membrane. Its subcellular location is the host Golgi apparatus membrane. It is found in the host smooth endoplasmic reticulum membrane. The protein localises to the host cell membrane. In terms of biological role, essential for the anterograde spread of the infection throughout the host nervous system. Together with the gE/gI heterodimer, US9 is involved in the sorting and transport of viral structural components toward axon tips. The protein is Envelope protein US9 of Homo sapiens (Human).